The sequence spans 173 residues: Crossover junction endodeoxyribonuclease RuvC (173 aa).

Residues aspartate 8, glutamate 67, and aspartate 139 contribute to the active site. Mg(2+)-binding residues include aspartate 8, glutamate 67, and aspartate 139.

It belongs to the RuvC family. In terms of assembly, homodimer which binds Holliday junction (HJ) DNA. The HJ becomes 2-fold symmetrical on binding to RuvC with unstacked arms; it has a different conformation from HJ DNA in complex with RuvA. In the full resolvosome a probable DNA-RuvA(4)-RuvB(12)-RuvC(2) complex forms which resolves the HJ. It depends on Mg(2+) as a cofactor.

It localises to the cytoplasm. The enzyme catalyses Endonucleolytic cleavage at a junction such as a reciprocal single-stranded crossover between two homologous DNA duplexes (Holliday junction).. In terms of biological role, the RuvA-RuvB-RuvC complex processes Holliday junction (HJ) DNA during genetic recombination and DNA repair. Endonuclease that resolves HJ intermediates. Cleaves cruciform DNA by making single-stranded nicks across the HJ at symmetrical positions within the homologous arms, yielding a 5'-phosphate and a 3'-hydroxyl group; requires a central core of homology in the junction. The consensus cleavage sequence is 5'-(A/T)TT(C/G)-3'. Cleavage occurs on the 3'-side of the TT dinucleotide at the point of strand exchange. HJ branch migration catalyzed by RuvA-RuvB allows RuvC to scan DNA until it finds its consensus sequence, where it cleaves and resolves the cruciform DNA. The chain is Crossover junction endodeoxyribonuclease RuvC from Klebsiella pneumoniae (strain 342).